The chain runs to 345 residues: Ubiquinone biosynthesis O-methyltransferase, mitochondrial (345 aa).

A mitochondrion-targeting transit peptide spans 1 to 86 (MWRGGRLSSR…TYRSSWKKLY (86 aa)). Arg124 serves as a coordination point for S-adenosyl-L-methionine. Residues Lys143 and Lys149 each carry the N6-acetyllysine modification. Gly154 and Asp175 together coordinate S-adenosyl-L-methionine. Lys196 bears the N6-acetyllysine mark. An S-adenosyl-L-methionine-binding site is contributed by Ser222. Glu223, Glu226, and His227 together coordinate Mg(2+).

The protein belongs to the class I-like SAM-binding methyltransferase superfamily. UbiG/COQ3 family. Component of a multi-subunit COQ enzyme complex, composed of at least COQ3, COQ4, COQ5, COQ6, COQ7 and COQ9. Mg(2+) is required as a cofactor.

It localises to the mitochondrion inner membrane. The enzyme catalyses 3,4-dihydroxy-5-(all-trans-decaprenyl)benzoate + S-adenosyl-L-methionine = 4-hydroxy-3-methoxy-5-(all-trans-decaprenyl)benzoate + S-adenosyl-L-homocysteine + H(+). It catalyses the reaction a 3-demethylubiquinone + S-adenosyl-L-methionine = a ubiquinone + S-adenosyl-L-homocysteine. The catalysed reaction is 3-demethylubiquinol-10 + S-adenosyl-L-methionine = ubiquinol-10 + S-adenosyl-L-homocysteine + H(+). It functions in the pathway cofactor biosynthesis; ubiquinone biosynthesis. Functionally, O-methyltransferase required for two non-consecutive steps during ubiquinone biosynthesis. Catalyzes the 2 O-methylation of 3,4-dihydroxy-5-(all-trans-decaprenyl)benzoic acid into 4-hydroxy-3-methoxy-5-(all-trans-decaprenyl)benzoic acid. Also catalyzes the last step of ubiquinone biosynthesis by mediating methylation of 3-demethylubiquinone into ubiquinone. Also able to mediate the methylation of 3-demethylubiquinol-10 into ubiquinol-10. This is Ubiquinone biosynthesis O-methyltransferase, mitochondrial from Rattus norvegicus (Rat).